The sequence spans 446 residues: Citrate/sodium symporter (446 aa).

5 helical membrane-spanning segments follow: residues 23 to 43, 46 to 66, 79 to 99, 110 to 130, and 148 to 168; these read IFGM…LSHF, AIPT…AIFG, IGGA…AGIF, VMDK…GAIL, and ILAG…CFGI. Residues I181 and G183 each coordinate Na(+). Citrate contacts are provided by N186 and G187. 5 helical membrane passes run 213–233, 267–287, 289–309, 335–355, and 364–384; these read IAIL…LDMI, ETAV…VVAK, ILPS…LIVA, QLLW…QEII, and VIAA…GWLI. Residues M399 and N401 each contribute to the Na(+) site. R402, G404, S405, and R428 together coordinate citrate. Residues 425–445 form a helical membrane-spanning segment; sequence ISSRLGGGIVLVIASIVFSMM.

It belongs to the 2-hydroxycarboxylate transporter (2-HCT) (TC 2.A.24) family. Homodimer.

It localises to the cell inner membrane. The enzyme catalyses citrate(out) + 2 Na(+)(out) = citrate(in) + 2 Na(+)(in). Functionally, secondary active transporter that catalyzes the uptake of citrate across the membrane with the concomitant uptake of sodium. Is specific for citrate. This Salmonella pullorum protein is Citrate/sodium symporter.